The primary structure comprises 38 residues: Photosystem I reaction center subunit IX (38 aa).

The helical transmembrane segment at 4 to 24 (FLTTAPVVAAIWFTATAGILI) threads the bilayer.

It belongs to the PsaJ family.

It localises to the cellular thylakoid membrane. Its function is as follows. May help in the organization of the PsaE and PsaF subunits. The sequence is that of Photosystem I reaction center subunit IX from Synechococcus sp. (strain CC9902).